A 281-amino-acid chain; its full sequence is Glyoxalase 1 (281 aa).

VOC domains lie at 4 to 127 (RALH…IGKA) and 132 to 251 (KVLR…FVGD).

Belongs to the glyoxalase I family. As to expression, expressed in the following tissues in both larvae and adults: pharynx, pharyngeal-intestinal valve, intestine, anal sphincter, vulval muscle, seam cells and the nervous system.

Its function is as follows. Thought to act as a glyoxalase. May remove methylglyoxal from mitochondrial proteins. Has roles in reducing oxidative stress and increasing lifespan. The sequence is that of Glyoxalase 1 (glod-4) from Caenorhabditis elegans.